Consider the following 290-residue polypeptide: Elongation factor Ts (290 aa).

Residues 82–85 form an involved in Mg(2+) ion dislocation from EF-Tu region; sequence TDFV.

Belongs to the EF-Ts family.

It localises to the cytoplasm. Its function is as follows. Associates with the EF-Tu.GDP complex and induces the exchange of GDP to GTP. It remains bound to the aminoacyl-tRNA.EF-Tu.GTP complex up to the GTP hydrolysis stage on the ribosome. The chain is Elongation factor Ts from Cellvibrio japonicus (strain Ueda107) (Pseudomonas fluorescens subsp. cellulosa).